Reading from the N-terminus, the 331-residue chain is Glyceraldehyde-3-phosphate dehydrogenase (331 aa).

NAD(+) contacts are provided by residues 12-13 (RI), Asp34, Arg78, and Thr120. D-glyceraldehyde 3-phosphate contacts are provided by residues 149–151 (SCT), Thr180, 209–210 (TG), and Arg232. The active-site Nucleophile is Cys150. NAD(+) is bound at residue Asn314.

It belongs to the glyceraldehyde-3-phosphate dehydrogenase family. As to quaternary structure, homotetramer.

It localises to the cytoplasm. The catalysed reaction is D-glyceraldehyde 3-phosphate + phosphate + NAD(+) = (2R)-3-phospho-glyceroyl phosphate + NADH + H(+). It participates in carbohydrate degradation; glycolysis; pyruvate from D-glyceraldehyde 3-phosphate: step 1/5. Functionally, catalyzes the oxidative phosphorylation of glyceraldehyde 3-phosphate (G3P) to 1,3-bisphosphoglycerate (BPG) using the cofactor NAD. The first reaction step involves the formation of a hemiacetal intermediate between G3P and a cysteine residue, and this hemiacetal intermediate is then oxidized to a thioester, with concomitant reduction of NAD to NADH. The reduced NADH is then exchanged with the second NAD, and the thioester is attacked by a nucleophilic inorganic phosphate to produce BPG. This is Glyceraldehyde-3-phosphate dehydrogenase (gapA) from Salmonella typhi.